The chain runs to 283 residues: Elongation factor Ts (283 aa).

The tract at residues 84–87 (TDFV) is involved in Mg(2+) ion dislocation from EF-Tu.

Belongs to the EF-Ts family.

It localises to the cytoplasm. Functionally, associates with the EF-Tu.GDP complex and induces the exchange of GDP to GTP. It remains bound to the aminoacyl-tRNA.EF-Tu.GTP complex up to the GTP hydrolysis stage on the ribosome. The protein is Elongation factor Ts of Bifidobacterium longum (strain DJO10A).